Consider the following 202-residue polypeptide: LexA repressor (202 aa).

Residues V29–E49 constitute a DNA-binding region (H-T-H motif). Catalysis depends on for autocatalytic cleavage activity residues S125 and K162.

This sequence belongs to the peptidase S24 family. In terms of assembly, homodimer.

It carries out the reaction Hydrolysis of Ala-|-Gly bond in repressor LexA.. Represses a number of genes involved in the response to DNA damage (SOS response), including recA and lexA. In the presence of single-stranded DNA, RecA interacts with LexA causing an autocatalytic cleavage which disrupts the DNA-binding part of LexA, leading to derepression of the SOS regulon and eventually DNA repair. The polypeptide is LexA repressor (Clostridium kluyveri (strain NBRC 12016)).